The chain runs to 194 residues: dTTP/UTP pyrophosphatase (194 aa).

The active-site Proton acceptor is the aspartate 66.

This sequence belongs to the Maf family. YhdE subfamily. The cofactor is a divalent metal cation.

It is found in the cytoplasm. The enzyme catalyses dTTP + H2O = dTMP + diphosphate + H(+). The catalysed reaction is UTP + H2O = UMP + diphosphate + H(+). Its function is as follows. Nucleoside triphosphate pyrophosphatase that hydrolyzes dTTP and UTP. May have a dual role in cell division arrest and in preventing the incorporation of modified nucleotides into cellular nucleic acids. This Anaeromyxobacter dehalogenans (strain 2CP-1 / ATCC BAA-258) protein is dTTP/UTP pyrophosphatase.